We begin with the raw amino-acid sequence, 245 residues long: 8-amino-3,8-dideoxy-manno-octulosonate cytidylyltransferase (245 aa).

It belongs to the KdsB family.

It is found in the cytoplasm. It catalyses the reaction 8-amino-3,8-dideoxy-alpha-D-manno-octulosonate + CTP = CMP-8-amino-3,8-dideoxy-alpha-D-manno-oct-2-ulosonate + diphosphate. Its pathway is bacterial outer membrane biogenesis; lipopolysaccharide biosynthesis. Functionally, activates KDO8N (a required 8-carbon sugar) for incorporation into bacterial lipopolysaccharide in the Shewanella genus. The sequence is that of 8-amino-3,8-dideoxy-manno-octulosonate cytidylyltransferase from Shewanella amazonensis (strain ATCC BAA-1098 / SB2B).